A 27-amino-acid chain; its full sequence is uncharacterized protein (27 aa).

The helical transmembrane segment at 6-26 (IIVLGALIALLELIRFLLQLL) threads the bilayer.

The protein belongs to the DinQ family.

It localises to the cell inner membrane. This is an uncharacterized protein from Escherichia coli (strain K12).